Here is a 230-residue protein sequence, read N- to C-terminus: Orotidine 5'-phosphate decarboxylase (230 aa).

Substrate contacts are provided by residues Asp9, Lys31, 58–67 (DLKFFDIPNT), Thr120, Arg180, Gln188, Gly208, and Arg209. The active-site Proton donor is the Lys60.

The protein belongs to the OMP decarboxylase family. Type 1 subfamily. As to quaternary structure, homodimer.

It catalyses the reaction orotidine 5'-phosphate + H(+) = UMP + CO2. It participates in pyrimidine metabolism; UMP biosynthesis via de novo pathway; UMP from orotate: step 2/2. Catalyzes the decarboxylation of orotidine 5'-monophosphate (OMP) to uridine 5'-monophosphate (UMP). The chain is Orotidine 5'-phosphate decarboxylase from Maridesulfovibrio salexigens (strain ATCC 14822 / DSM 2638 / NCIMB 8403 / VKM B-1763) (Desulfovibrio salexigens).